A 440-amino-acid polypeptide reads, in one-letter code: tRNA(Ile)-lysidine synthase (440 aa).

Residue Ser-19–Ser-24 coordinates ATP.

This sequence belongs to the tRNA(Ile)-lysidine synthase family.

Its subcellular location is the cytoplasm. It carries out the reaction cytidine(34) in tRNA(Ile2) + L-lysine + ATP = lysidine(34) in tRNA(Ile2) + AMP + diphosphate + H(+). Ligates lysine onto the cytidine present at position 34 of the AUA codon-specific tRNA(Ile) that contains the anticodon CAU, in an ATP-dependent manner. Cytidine is converted to lysidine, thus changing the amino acid specificity of the tRNA from methionine to isoleucine. The protein is tRNA(Ile)-lysidine synthase of Buchnera aphidicola subsp. Acyrthosiphon pisum (strain APS) (Acyrthosiphon pisum symbiotic bacterium).